Here is a 202-residue protein sequence, read N- to C-terminus: Small ribosomal subunit protein uS4c (202 aa).

The region spanning 90 to 159 is the S4 RNA-binding domain; sequence MRLDNIIFRL…TKNYEFSQTY (70 aa).

The protein belongs to the universal ribosomal protein uS4 family. Part of the 30S ribosomal subunit. Contacts protein S5. The interaction surface between S4 and S5 is involved in control of translational fidelity.

Its subcellular location is the plastid. It localises to the chloroplast. In terms of biological role, one of the primary rRNA binding proteins, it binds directly to 16S rRNA where it nucleates assembly of the body of the 30S subunit. With S5 and S12 plays an important role in translational accuracy. This is Small ribosomal subunit protein uS4c (rps4) from Huperzia lucidula (Shining clubmoss).